The primary structure comprises 550 residues: Amino acid transporter AVT1D (550 aa).

Positions 1–16 (MKLDEEFLHDRDHSFL) are enriched in basic and acidic residues. The tract at residues 1–99 (MKLDEEFLHD…FMPQSSSRRL (99 aa)) is disordered. Residues 84-99 (TPPSVSFMPQSSSRRL) are compositionally biased toward polar residues. The next 11 helical transmembrane spans lie at 164–184 (SVLNGTNVLCGLGLITMPYAI), 189–209 (WLGLPILLFFGVITCYTGVLM), 236–256 (FIISILLYVELYAACVEYIIM), 264–286 (LFPNVSLSIASGISLDSPQIFAI), 308–328 (SVGGVLASILLGICLFWVGAV), 345–365 (LPVTIGIFGFGYSGHSVFPNI), 375–395 (FPLVLVICFSFCTVLYIAVAV), 424–444 (VWTAVITPMTKYALTITPIVM), 459–479 (GVSILFRTMLVTSTLVVALSV), 481–501 (FFAIVAALIGSFLAMLVALIF), and 521–541 (LCIFIIVFGVVSGCCGTYSAI).

Belongs to the amino acid/polyamine transporter 2 family. Amino acid/auxin permease (AAAP) (TC 2.A.18.5) subfamily.

It localises to the membrane. The protein is Amino acid transporter AVT1D of Arabidopsis thaliana (Mouse-ear cress).